The primary structure comprises 84 residues: UPF0320 protein YNR077C (84 aa).

It belongs to the UPF0320 family.

The sequence is that of UPF0320 protein YNR077C from Saccharomyces cerevisiae (strain ATCC 204508 / S288c) (Baker's yeast).